Consider the following 86-residue polypeptide: Kappa-theraphotoxin-Cg1a 3 (86 aa).

A signal peptide spans Met-1 to Ala-21. Positions Ala-22–Arg-50 are excised as a propeptide. 3 disulfide bridges follow: Cys-52/Cys-66, Cys-59/Cys-71, and Cys-65/Cys-78. Phe-84 is modified (phenylalanine amide).

The protein belongs to the neurotoxin 10 (Hwtx-1) family. 28 (Jztx-11) subfamily. In terms of tissue distribution, expressed by the venom gland.

Its subcellular location is the secreted. Functionally, this toxin acts as a voltage-dependent gating-modifier. It inhibits the sodium conductance (IC(50)=124 nM) and slows the fast inactivation (EC(50)=1180 nM) of Nav1.5/SCN5A. It significantly shifts the activation to more depolarized voltages and decreases the deactivation of Nav1.5 currents upon extreme depolarization, but only slightly affects voltage-dependence of steady-state inactivation. In addition, this toxin causes an approximately five-fold decrease in the rate of recovery from inactivation and an approximately 1.9-fold reduction in the closed-state inactivation rate. This toxin integrates the functions of site 3 toxins (alpha-scorpion toxins) with site 4 toxins (beta-scorpion and spider toxins) by targeting multiple sites on Nav1.5. Also shows inhibition of voltage-gated potassium channels (5 uM completely inhibits Kv2.1/KCNB1, whereas 5 uM moderately inhibits Kv4.2/KCND2 Kv4.1/KCND1 channels). The protein is Kappa-theraphotoxin-Cg1a 3 of Chilobrachys guangxiensis (Chinese earth tiger tarantula).